The primary structure comprises 459 residues: UNC93-like protein 1 (459 aa).

The tract at residues 1–26 (MNVRDEGKTTAEKHGGGEENKSPENK) is disordered. Transmembrane regions (helical) follow at residues 38 to 58 (LMGF…GMGG), 73 to 93 (AVYT…NVLG), 96 to 116 (LTLA…LYYN), 122 to 142 (AFAI…WAGE), 159 to 179 (IALF…IPFI), 195 to 215 (YIAF…ILPA), 251 to 271 (LLIV…FNNV), 287 to 307 (FYWG…DFSF), 314 to 334 (GFTG…GGLA), 355 to 375 (GIEF…DAMY), and 425 to 445 (LIVN…LVYF).

It belongs to the unc-93 family.

It localises to the membrane. The sequence is that of UNC93-like protein 1 from Arabidopsis thaliana (Mouse-ear cress).